The following is an 854-amino-acid chain: Leucine--tRNA ligase (854 aa).

Residues 1–32 (MARRDMAAETMDPRASTEPSPNEPREPARYDH) are disordered. Residues 23-32 (EPREPARYDH) are compositionally biased toward basic and acidic residues. The short motif at 69-80 (PYPSGSGLHVGH) is the 'HIGH' region element. The 'KMSKS' region motif lies at 633–637 (KMSKS). ATP is bound at residue K636.

It belongs to the class-I aminoacyl-tRNA synthetase family.

It is found in the cytoplasm. It catalyses the reaction tRNA(Leu) + L-leucine + ATP = L-leucyl-tRNA(Leu) + AMP + diphosphate. This is Leucine--tRNA ligase from Sorangium cellulosum (strain So ce56) (Polyangium cellulosum (strain So ce56)).